The sequence spans 701 residues: Elongation factor G (701 aa).

One can recognise a tr-type G domain in the interval 8–290 (TQYRNIGISA…AIIEYLPSPK (283 aa)). Residues 17–24 (AHIDAGKT), 88–92 (DTPGH), and 142–145 (NKMD) each bind GTP.

It belongs to the TRAFAC class translation factor GTPase superfamily. Classic translation factor GTPase family. EF-G/EF-2 subfamily.

Its subcellular location is the cytoplasm. Functionally, catalyzes the GTP-dependent ribosomal translocation step during translation elongation. During this step, the ribosome changes from the pre-translocational (PRE) to the post-translocational (POST) state as the newly formed A-site-bound peptidyl-tRNA and P-site-bound deacylated tRNA move to the P and E sites, respectively. Catalyzes the coordinated movement of the two tRNA molecules, the mRNA and conformational changes in the ribosome. The chain is Elongation factor G from Buchnera aphidicola subsp. Cinara cedri (strain Cc).